The primary structure comprises 390 residues: Monomeric sarcosine oxidase (390 aa).

Residue 6–36 (DVIVVGAGSMGMAAGYQLAKQGVKTLLVDAF) coordinates FAD. Position 316 is an S-8alpha-FAD cysteine (cysteine 316).

As to quaternary structure, monomer. Requires FAD as cofactor.

It localises to the cytoplasm. The catalysed reaction is sarcosine + O2 + H2O = formaldehyde + glycine + H2O2. With respect to regulation, pyrrole-2-carboxylate is a competitive inhibitor. N-(cyclopropyl)glycine (CPG) is a mechanism-based inhibitor and inactivates the enzyme by covalently modifying the flavin. Functionally, catalyzes the oxidative demethylation of sarcosine. Can also oxidize other secondary amino acids such as N-methyl-L-alanine. This Bacillus sp. (strain B-0618) protein is Monomeric sarcosine oxidase (soxA).